Reading from the N-terminus, the 414-residue chain is Dimethylsulfoniopropionate lyase DddY (414 aa).

A signal peptide spans 1-18 (MKYMVLFSGLLFSNVLVA).

This sequence belongs to the DMSP lyase DddY family.

It localises to the periplasm. It carries out the reaction S,S-dimethyl-beta-propiothetin = acrylate + dimethyl sulfide + H(+). Its function is as follows. Catalyzes the cleavage of dimethylsulfoniopropionate (DMSP) into dimethyl sulfide (DMS) and acrylate. The sequence is that of Dimethylsulfoniopropionate lyase DddY from Shewanella woodyi (strain ATCC 51908 / MS32).